Here is a 33-residue protein sequence, read N- to C-terminus: Dermonecrotic toxin LiSicTox-alphaI-1 (33 aa).

Glutamate 32 is a Mg(2+) binding site.

It belongs to the arthropod phospholipase D family. Class II subfamily. It depends on Mg(2+) as a cofactor. In terms of processing, contains 2 disulfide bonds. As to expression, expressed by the venom gland.

Its subcellular location is the secreted. The enzyme catalyses an N-(acyl)-sphingosylphosphocholine = an N-(acyl)-sphingosyl-1,3-cyclic phosphate + choline. It carries out the reaction an N-(acyl)-sphingosylphosphoethanolamine = an N-(acyl)-sphingosyl-1,3-cyclic phosphate + ethanolamine. The catalysed reaction is a 1-acyl-sn-glycero-3-phosphocholine = a 1-acyl-sn-glycero-2,3-cyclic phosphate + choline. It catalyses the reaction a 1-acyl-sn-glycero-3-phosphoethanolamine = a 1-acyl-sn-glycero-2,3-cyclic phosphate + ethanolamine. Dermonecrotic toxins cleave the phosphodiester linkage between the phosphate and headgroup of certain phospholipids (sphingolipid and lysolipid substrates), forming an alcohol (often choline) and a cyclic phosphate. This toxin acts on sphingomyelin (SM). It may also act on ceramide phosphoethanolamine (CPE), lysophosphatidylcholine (LPC) and lysophosphatidylethanolamine (LPE), but not on lysophosphatidylserine (LPS), and lysophosphatidylglycerol (LPG). It acts by transphosphatidylation, releasing exclusively cyclic phosphate products as second products. In vivo, intradermal injection induces dermonecrosis. Induces hemolysis, increased vascular permeability, edema, inflammatory response, and platelet aggregation. The chain is Dermonecrotic toxin LiSicTox-alphaI-1 from Loxosceles intermedia (Brown spider).